We begin with the raw amino-acid sequence, 271 residues long: MWRTLLAALLATAGAQYERYSFRSFPRDELMPLESAYRYGLDQYSTENWPESVSYLEVSMRLYRLLRDTEAFCHHNCSSAGPLTAPPPADGELAELRLLAGVLRRAQCLRRCKQGLPAFRQAQPGRELLEEFQRREPYKYLQFAYFKANNLPKAIAAAHTFLLKHPDDEMMQRNMAYYKSIPDAEEHIKDLETKPYENLFVRAVRAYNGDNWRTSISDMELALPDFFKTYDDCIAACEGSREIKDFKDFYLSIADHYIEVLACKVQFDITT.

A signal peptide spans 1–15; the sequence is MWRTLLAALLATAGA. N-linked (GlcNAc...) asparagine glycosylation is present at Asn76.

The protein belongs to the leprecan family. In terms of tissue distribution, found in articular chondrocytes. Expressed in a variety of tissues.

It is found in the secreted. Its subcellular location is the extracellular space. It localises to the extracellular matrix. Necessary for efficient 3-hydroxylation of fibrillar collagen prolyl residues. The polypeptide is Cartilage-associated protein (CRTAP) (Gallus gallus (Chicken)).